We begin with the raw amino-acid sequence, 396 residues long: Elongation factor Tu (396 aa).

Residues 10-205 (KPHVNVGTIG…AVDEYIPTPE (196 aa)) enclose the tr-type G domain. Residues 19 to 26 (GHVDHGKT) form a G1 region. 19–26 (GHVDHGKT) is a GTP binding site. Thr-26 is a binding site for Mg(2+). The G2 stretch occupies residues 61–65 (GITIA). The tract at residues 82–85 (DCPG) is G3. Residues 82-86 (DCPGH) and 137-140 (NKTD) contribute to the GTP site. The segment at 137–140 (NKTD) is G4. The segment at 175–177 (SAL) is G5.

Belongs to the TRAFAC class translation factor GTPase superfamily. Classic translation factor GTPase family. EF-Tu/EF-1A subfamily. As to quaternary structure, monomer.

The protein resides in the cytoplasm. The enzyme catalyses GTP + H2O = GDP + phosphate + H(+). Its function is as follows. GTP hydrolase that promotes the GTP-dependent binding of aminoacyl-tRNA to the A-site of ribosomes during protein biosynthesis. This is Elongation factor Tu from Salinibacter ruber (strain DSM 13855 / M31).